The sequence spans 61 residues: Small ribosomal subunit protein uS14 (61 aa).

4 residues coordinate Zn(2+): cysteine 24, cysteine 27, cysteine 40, and cysteine 43.

Belongs to the universal ribosomal protein uS14 family. Zinc-binding uS14 subfamily. As to quaternary structure, part of the 30S ribosomal subunit. Contacts proteins S3 and S10. The cofactor is Zn(2+).

Its function is as follows. Binds 16S rRNA, required for the assembly of 30S particles and may also be responsible for determining the conformation of the 16S rRNA at the A site. The polypeptide is Small ribosomal subunit protein uS14 (Borreliella burgdorferi (strain ATCC 35210 / DSM 4680 / CIP 102532 / B31) (Borrelia burgdorferi)).